The following is a 379-amino-acid chain: Queuine tRNA-ribosyltransferase (379 aa).

The Proton acceptor role is filled by aspartate 94. Residues 94–98 (DSGGF), aspartate 148, glutamine 191, and glycine 218 each bind substrate. Positions 249-255 (GVGSPDS) are RNA binding. Aspartate 268 acts as the Nucleophile in catalysis. Positions 273 to 277 (TRIGR) are RNA binding; important for wobble base 34 recognition. The Zn(2+) site is built by cysteine 306, cysteine 308, cysteine 311, and histidine 337.

The protein belongs to the queuine tRNA-ribosyltransferase family. As to quaternary structure, homodimer. Within each dimer, one monomer is responsible for RNA recognition and catalysis, while the other monomer binds to the replacement base PreQ1. The cofactor is Zn(2+).

The catalysed reaction is 7-aminomethyl-7-carbaguanine + guanosine(34) in tRNA = 7-aminomethyl-7-carbaguanosine(34) in tRNA + guanine. It participates in tRNA modification; tRNA-queuosine biosynthesis. Functionally, catalyzes the base-exchange of a guanine (G) residue with the queuine precursor 7-aminomethyl-7-deazaguanine (PreQ1) at position 34 (anticodon wobble position) in tRNAs with GU(N) anticodons (tRNA-Asp, -Asn, -His and -Tyr). Catalysis occurs through a double-displacement mechanism. The nucleophile active site attacks the C1' of nucleotide 34 to detach the guanine base from the RNA, forming a covalent enzyme-RNA intermediate. The proton acceptor active site deprotonates the incoming PreQ1, allowing a nucleophilic attack on the C1' of the ribose to form the product. After dissociation, two additional enzymatic reactions on the tRNA convert PreQ1 to queuine (Q), resulting in the hypermodified nucleoside queuosine (7-(((4,5-cis-dihydroxy-2-cyclopenten-1-yl)amino)methyl)-7-deazaguanosine). This is Queuine tRNA-ribosyltransferase from Anoxybacillus flavithermus (strain DSM 21510 / WK1).